A 607-amino-acid polypeptide reads, in one-letter code: Aspartate--tRNA(Asp/Asn) ligase (607 aa).

Glu-173 lines the L-aspartate pocket. Positions 197–200 (QLFK) are aspartate. Arg-219 is an L-aspartate binding site. Residues 219-221 (RDE) and Gln-228 contribute to the ATP site. Residue His-456 coordinates L-aspartate. Glu-498 is an ATP binding site. Arg-505 contributes to the L-aspartate binding site. 550-553 (GLDR) serves as a coordination point for ATP.

It belongs to the class-II aminoacyl-tRNA synthetase family. Type 1 subfamily. In terms of assembly, homodimer.

It is found in the cytoplasm. The enzyme catalyses tRNA(Asx) + L-aspartate + ATP = L-aspartyl-tRNA(Asx) + AMP + diphosphate. Its function is as follows. Aspartyl-tRNA synthetase with relaxed tRNA specificity since it is able to aspartylate not only its cognate tRNA(Asp) but also tRNA(Asn). Reaction proceeds in two steps: L-aspartate is first activated by ATP to form Asp-AMP and then transferred to the acceptor end of tRNA(Asp/Asn). The protein is Aspartate--tRNA(Asp/Asn) ligase of Magnetococcus marinus (strain ATCC BAA-1437 / JCM 17883 / MC-1).